The following is a 141-amino-acid chain: Hemoglobin subunit alpha-1 (141 aa).

One can recognise a Globin domain in the interval 1-141; sequence VLSEGNKKAI…VTYQLSSLYR (141 aa). His59 provides a ligand contact to O2. His88 lines the heme b pocket.

Belongs to the globin family. Heterotetramer of two alpha chains and two beta chains. As to expression, red blood cells.

Its function is as follows. Involved in oxygen transport from the lung to the various peripheral tissues. The chain is Hemoglobin subunit alpha-1 from Torpedo marmorata (Marbled electric ray).